The primary structure comprises 182 residues: Lipoprotein signal peptidase (182 aa).

4 consecutive transmembrane segments (helical) span residues 15-35 (IYLG…FLVI), 44-64 (LEVF…FVFG), 65-85 (AFQD…VFLI), and 97-117 (PWGW…KFFV). Catalysis depends on residues aspartate 140 and aspartate 162. The chain crosses the membrane as a helical span at residues 155-175 (WPAFNVADSCVTIGLTILIFT).

Belongs to the peptidase A8 family.

The protein localises to the cell inner membrane. The enzyme catalyses Release of signal peptides from bacterial membrane prolipoproteins. Hydrolyzes -Xaa-Yaa-Zaa-|-(S,diacylglyceryl)Cys-, in which Xaa is hydrophobic (preferably Leu), and Yaa (Ala or Ser) and Zaa (Gly or Ala) have small, neutral side chains.. Its pathway is protein modification; lipoprotein biosynthesis (signal peptide cleavage). Its function is as follows. This protein specifically catalyzes the removal of signal peptides from prolipoproteins. The chain is Lipoprotein signal peptidase from Leptospira interrogans serogroup Icterohaemorrhagiae serovar Lai (strain 56601).